The sequence spans 379 residues: Cyclin-dependent kinase-like 4 (379 aa).

The 283-residue stretch at 4-286 folds into the Protein kinase domain; that stretch reads YEKLAKTGEG…CSQLLESSYF (283 aa). ATP is bound by residues 10–18 and Lys-33; that span reads TGEGSYGVV. A [NKR]KIAxRE motif is present at residues 45 to 51; the sequence is KKIALRE. The active-site Proton acceptor is Asp-126.

This sequence belongs to the protein kinase superfamily. CMGC Ser/Thr protein kinase family. CDC2/CDKX subfamily.

The protein localises to the cytoplasm. The enzyme catalyses L-seryl-[protein] + ATP = O-phospho-L-seryl-[protein] + ADP + H(+). It carries out the reaction L-threonyl-[protein] + ATP = O-phospho-L-threonyl-[protein] + ADP + H(+). The sequence is that of Cyclin-dependent kinase-like 4 (CDKL4) from Homo sapiens (Human).